The primary structure comprises 1180 residues: Lon protease homolog 2, peroxisomal (1180 aa).

One can recognise a Lon N-terminal domain in the interval 19 to 366 (LPTCKLDSNL…ELINMINQLI (348 aa)). Residues 416–465 (PISNRGNIKSFNNSENGNNNKTNGSGITSRRPKSNEDGGEVYDEEDDDEE) are disordered. The span at 422–444 (NIKSFNNSENGNNNKTNGSGITS) shows a compositional bias: low complexity. Residues 452-465 (DGGEVYDEEDDDEE) show a composition bias toward acidic residues. Residue 667-674 (GPPGTGKT) coordinates ATP. A Lon proteolytic domain is found at 924 to 1163 (NSRVGIVNGL…YDVMKILWGE (240 aa)). Catalysis depends on residues serine 1032 and lysine 1075.

It belongs to the peptidase S16 family.

Its subcellular location is the peroxisome matrix. It carries out the reaction Hydrolysis of proteins in presence of ATP.. Its function is as follows. ATP-dependent serine protease that mediates the selective degradation of misfolded and unassembled polypeptides in the peroxisomal matrix. Necessary for type 2 peroxisome targeting signal (PTS2)-containing protein processing and facilitates peroxisome matrix protein import. The protein is Lon protease homolog 2, peroxisomal of Scheffersomyces stipitis (strain ATCC 58785 / CBS 6054 / NBRC 10063 / NRRL Y-11545) (Yeast).